The chain runs to 673 residues: UvrABC system protein B (673 aa).

The Helicase ATP-binding domain occupies 26-183; the sequence is EGLEDGLAHQ…RRLAELQYTR (158 aa). 39–46 lines the ATP pocket; sequence GVTGSGKT. The short motif at 92–115 is the Beta-hairpin element; sequence YYDYYQPEAYVPSSDTFIEKDASV. The 167-residue stretch at 431–597 folds into the Helicase C-terminal domain; sequence QVDDLLSEIR…GLNKKVVDIL (167 aa). In terms of domain architecture, UVR spans 633–668; the sequence is QQKIHELEGQMMQHAQNLEFEEAAQIRDQLHQLREL.

The protein belongs to the UvrB family. In terms of assembly, forms a heterotetramer with UvrA during the search for lesions. Interacts with UvrC in an incision complex.

It localises to the cytoplasm. Its function is as follows. The UvrABC repair system catalyzes the recognition and processing of DNA lesions. A damage recognition complex composed of 2 UvrA and 2 UvrB subunits scans DNA for abnormalities. Upon binding of the UvrA(2)B(2) complex to a putative damaged site, the DNA wraps around one UvrB monomer. DNA wrap is dependent on ATP binding by UvrB and probably causes local melting of the DNA helix, facilitating insertion of UvrB beta-hairpin between the DNA strands. Then UvrB probes one DNA strand for the presence of a lesion. If a lesion is found the UvrA subunits dissociate and the UvrB-DNA preincision complex is formed. This complex is subsequently bound by UvrC and the second UvrB is released. If no lesion is found, the DNA wraps around the other UvrB subunit that will check the other stand for damage. This Klebsiella pneumoniae (strain 342) protein is UvrABC system protein B.